The sequence spans 103 residues: Small ribosomal subunit protein uS10 (103 aa).

Belongs to the universal ribosomal protein uS10 family. In terms of assembly, part of the 30S ribosomal subunit.

Involved in the binding of tRNA to the ribosomes. This Xanthomonas axonopodis pv. citri (strain 306) protein is Small ribosomal subunit protein uS10.